We begin with the raw amino-acid sequence, 143 residues long: Large ribosomal subunit protein uL11 (143 aa).

The protein belongs to the universal ribosomal protein uL11 family. As to quaternary structure, part of the ribosomal stalk of the 50S ribosomal subunit. Interacts with L10 and the large rRNA to form the base of the stalk. L10 forms an elongated spine to which L12 dimers bind in a sequential fashion forming a multimeric L10(L12)X complex. Post-translationally, one or more lysine residues are methylated.

Functionally, forms part of the ribosomal stalk which helps the ribosome interact with GTP-bound translation factors. This Bordetella pertussis (strain Tohama I / ATCC BAA-589 / NCTC 13251) protein is Large ribosomal subunit protein uL11.